Consider the following 172-residue polypeptide: Nicotinamide-nucleotide adenylyltransferase (172 aa).

The protein belongs to the archaeal NMN adenylyltransferase family.

The protein resides in the cytoplasm. It carries out the reaction beta-nicotinamide D-ribonucleotide + ATP + H(+) = diphosphate + NAD(+). It functions in the pathway cofactor biosynthesis; NAD(+) biosynthesis; NAD(+) from nicotinamide D-ribonucleotide: step 1/1. In Sulfurisphaera tokodaii (strain DSM 16993 / JCM 10545 / NBRC 100140 / 7) (Sulfolobus tokodaii), this protein is Nicotinamide-nucleotide adenylyltransferase.